We begin with the raw amino-acid sequence, 163 residues long: Small ribosomal subunit protein uS7 (163 aa).

Belongs to the universal ribosomal protein uS7 family. In terms of assembly, part of the 30S ribosomal subunit. Contacts proteins S9 and S11.

In terms of biological role, one of the primary rRNA binding proteins, it binds directly to 16S rRNA where it nucleates assembly of the head domain of the 30S subunit. Is located at the subunit interface close to the decoding center, probably blocks exit of the E-site tRNA. The chain is Small ribosomal subunit protein uS7 from Rickettsia bellii (strain RML369-C).